A 316-amino-acid polypeptide reads, in one-letter code: Heme oxygenase 2 (316 aa).

The span at Met1–Asp12 shows a compositional bias: acidic residues. The interval Met1–Arg29 is disordered. Residue Ser2 is modified to N-acetylserine. Phosphoserine is present on Ser2. Residues Glu13 to Gln27 are compositionally biased toward basic and acidic residues. Residue His45 participates in heme b binding. HRM repeat units follow at residues Lys264–Ala269 and Ser281–Thr286. S-nitrosocysteine occurs at positions 265 and 282.

It belongs to the heme oxygenase family. Post-translationally, S-nitrosylated by BLVRB.

The protein resides in the microsome. Its subcellular location is the endoplasmic reticulum. It catalyses the reaction heme b + 3 reduced [NADPH--hemoprotein reductase] + 3 O2 = biliverdin IXalpha + CO + Fe(2+) + 3 oxidized [NADPH--hemoprotein reductase] + 3 H2O + H(+). Functionally, heme oxygenase cleaves the heme ring at the alpha methene bridge to form biliverdin. Biliverdin is subsequently converted to bilirubin by biliverdin reductase. Under physiological conditions, the activity of heme oxygenase is highest in the spleen, where senescent erythrocytes are sequestrated and destroyed. Heme oxygenase 2 could be implicated in the production of carbon monoxide in brain where it could act as a neurotransmitter. This Macaca fascicularis (Crab-eating macaque) protein is Heme oxygenase 2 (HMOX2).